We begin with the raw amino-acid sequence, 1043 residues long: Sucrose-phosphate synthase 1 (1043 aa).

A compositionally biased stretch (basic and acidic residues) spans 95–117 (EEKEAQRLAKRRLEREKGRREAT). Residues 95 to 127 (EEKEAQRLAKRRLEREKGRREATADMSEEFSEG) form a disordered region. Phosphoserine occurs at positions 121, 125, 152, and 155. Residues 670–693 (PRHPQWQSDDGGDNSEPESPSDSL) form a disordered region.

Belongs to the glycosyltransferase 1 family. In terms of assembly, homodimer or homotetramer. Phosphorylated at Ser-152 upon sucrose supply. In terms of tissue distribution, expressed in seeds, stems, rosette leaves, flowers and siliques. Highly expressed in maturing nectaries.

It catalyses the reaction beta-D-fructose 6-phosphate + UDP-alpha-D-glucose = sucrose 6(F)-phosphate + UDP + H(+). The protein operates within glycan biosynthesis; sucrose biosynthesis; sucrose from D-fructose 6-phosphate and UDP-alpha-D-glucose: step 1/2. With respect to regulation, activity is regulated by phosphorylation and moderated by concentration of metabolites and light. In terms of biological role, plays a major role in photosynthetic sucrose synthesis by catalyzing the rate-limiting step of sucrose biosynthesis from UDP-glucose and fructose- 6-phosphate. Involved in the regulation of carbon partitioning in the leaves of plants. May regulate the synthesis of sucrose and therefore play a major role as a limiting factor in the export of photoassimilates out of the leaf. Plays a role for sucrose availability that is essential for plant growth and fiber elongation. Required for nectar secretion. This is Sucrose-phosphate synthase 1 (SPS1) from Arabidopsis thaliana (Mouse-ear cress).